The following is a 409-amino-acid chain: Peptidase T (409 aa).

Zn(2+) is bound at residue H78. D80 is a catalytic residue. D140 is a Zn(2+) binding site. Residue E173 is the Proton acceptor of the active site. 3 residues coordinate Zn(2+): E174, D196, and H379.

Belongs to the peptidase M20B family. The cofactor is Zn(2+).

The protein resides in the cytoplasm. The enzyme catalyses Release of the N-terminal residue from a tripeptide.. Its function is as follows. Cleaves the N-terminal amino acid of tripeptides. The polypeptide is Peptidase T (Escherichia coli (strain SE11)).